A 59-amino-acid chain; its full sequence is Phycobilisome degradation protein NblA (59 aa).

To chloroplast ycf18.

In terms of biological role, involved in phycobilisome (PBS) degradation during nutrient deprivation. May mark the PBS for degradation by covalent association with PBS components or may disrupt the PBS via ionic interactions. The polypeptide is Phycobilisome degradation protein NblA (Synechococcus elongatus (strain ATCC 33912 / PCC 7942 / FACHB-805) (Anacystis nidulans R2)).